A 362-amino-acid chain; its full sequence is Porin Omp2b (362 aa).

The N-terminal stretch at 1 to 22 is a signal peptide; it reads MNIKSLLLGSAAALVAASGAQA.

It belongs to the alphaproteobacteria porin family. Homotrimer.

The protein localises to the cell outer membrane. Functionally, forms passive diffusion pores that allow small molecular weight hydrophilic materials across the outer membrane. The sequence is that of Porin Omp2b (omp2b) from Brucella neotomae.